The primary structure comprises 199 residues: Inner membrane protein E199L (199 aa).

Residues 150–170 form a helical membrane-spanning segment; sequence INVMNHPFLTLILIILILIII.

The protein belongs to the asfivirus E199L family. As to quaternary structure, interacts with host PYCR2; this interaction results in autophagy activation. Contains intramolecular disulfide bonds.

The protein resides in the virion membrane. The protein localises to the host membrane. Functionally, essential for viral fusion with host endosomal membrane and core release. Not required for virus morphogenesis and egress. Induces complete autophagy through the interaction with and down-regulation of host PYCR2. The protein is Inner membrane protein E199L of Ornithodoros (relapsing fever ticks).